The sequence spans 711 residues: C6 finger domain transcription factor nscR (711 aa).

The segment at residues 17-43 (CELCRERKVKCDKLDPCTNCSSAGVIC) is a DNA-binding region (zn(2)-C6 fungal-type). The interval 372-394 (SPPKHINDSDFDPTTSHDVPDRE) is disordered.

The protein localises to the nucleus. In terms of biological role, transcription factor that specifically regulates the neosartoricin B biosynthesis gene cluster. The chain is C6 finger domain transcription factor nscR from Trichophyton tonsurans (strain CBS 112818) (Scalp ringworm fungus).